The primary structure comprises 131 residues: Snaclec coagulation factor IX/factor X-binding protein subunit A (131 aa).

One can recognise a C-type lectin domain in the interval 1 to 131 (DCLPGWSSHE…EEPQRFTCEI (131 aa)). 3 disulfides stabilise this stretch: cysteine 2/cysteine 13, cysteine 30/cysteine 129, and cysteine 104/cysteine 121. Serine 41, glutamate 43, and glutamate 47 together coordinate Ca(2+). Glutamate 130 serves as a coordination point for Ca(2+).

This sequence belongs to the snaclec family. Heterodimer of subunits A and B; disulfide-linked. Expressed by the venom gland.

The protein localises to the secreted. Anticoagulant protein which binds to coagulation factor IX (F9) and coagulation factor X (F10) in the presence of calcium. It may bind the gamma-carboxyglutamic acid-domain regions of factors with a 1 to 1 stoichiometry. The dissociation constant (K(d)) are 6.6 nM for factor IX (F9) and 125 nM for factor X (F10). Does not bind carbohydrates. The chain is Snaclec coagulation factor IX/factor X-binding protein subunit A from Echis carinatus (Saw-scaled viper).